A 1303-amino-acid chain; its full sequence is Zinc finger CCCH domain-containing protein 4 (1303 aa).

The segment covering methionine 1–serine 33 has biased composition (pro residues). Residues methionine 1–serine 388 are disordered. Residues aspartate 53–glutamine 73 show a composition bias toward acidic residues. Threonine 72 and threonine 75 each carry phosphothreonine. Serine 76, serine 92, and serine 94 each carry phosphoserine. Positions glutamate 80 to serine 99 are enriched in basic and acidic residues. Positions aspartate 95 to arginine 128 form a coiled coil. The segment covering histidine 100–alanine 130 has biased composition (basic residues). Acidic residues predominate over residues aspartate 135–aspartate 144. Residue tyrosine 155 is modified to Phosphotyrosine. Acidic residues predominate over residues glutamate 194–aspartate 218. Basic and acidic residues predominate over residues aspartate 219–serine 235. A compositionally biased stretch (basic residues) spans arginine 238 to glycine 251. Over residues serine 252 to glycine 274 the composition is skewed to gly residues. A compositionally biased stretch (acidic residues) spans proline 278–aspartate 304. Residues glutamate 305–glycine 321 are compositionally biased toward basic and acidic residues. Basic residues predominate over residues glycine 323 to glycine 346. Acidic residues predominate over residues asparagine 358–glycine 369. Basic and acidic residues predominate over residues arginine 377–serine 388. 3 C3H1-type zinc fingers span residues lysine 390 to glutamate 417, proline 419 to phenylalanine 446, and proline 447 to leucine 470. Residues alanine 486–valine 496 are compositionally biased toward acidic residues. The interval alanine 486 to glutamine 571 is disordered. Pro residues-rich tracts occupy residues leucine 507–proline 529 and glycine 539–proline 558. Arginine 601 is modified (asymmetric dimethylarginine). Pro residues predominate over residues proline 605 to methionine 624. Disordered regions lie at residues proline 605–methionine 685, glycine 710–glutamine 955, and proline 996–lysine 1288. Residues proline 630–alanine 650 show a composition bias toward basic and acidic residues. Residues asparagine 659–proline 673 are compositionally biased toward pro residues. 2 stretches are compositionally biased toward basic and acidic residues: residues aspartate 717–glutamate 739 and glutamate 782–arginine 795. A coiled-coil region spans residues arginine 767–glycine 800. Phosphoserine occurs at positions 807 and 808. Residues serine 815–glycine 843 are compositionally biased toward polar residues. Over residues alanine 860–glutamate 875 the composition is skewed to basic and acidic residues. Residues serine 904, serine 907, and serine 908 each carry the phosphoserine modification. Positions serine 904–serine 918 are enriched in low complexity. Polar residues-rich tracts occupy residues glycine 1028–alanine 1038 and valine 1053–proline 1062. Positions lysine 1067–lysine 1084 are enriched in basic and acidic residues. Low complexity predominate over residues proline 1097 to serine 1110. At serine 1104 the chain carries Phosphoserine. Threonine 1106 carries the post-translational modification Phosphothreonine. A phosphoserine mark is found at serine 1108, serine 1110, and serine 1114. At threonine 1118 the chain carries Phosphothreonine. The span at glycine 1129–glutamine 1139 shows a compositional bias: gly residues. The segment covering lysine 1224–alanine 1234 has biased composition (low complexity). Positions threonine 1235–proline 1245 are enriched in pro residues. The segment covering valine 1259–glycine 1268 has biased composition (polar residues). 2 positions are modified to phosphoserine: serine 1269 and serine 1275.

The protein belongs to the suppressor of sable family. As to quaternary structure, interacts with WDR82.

It localises to the chromosome. In terms of biological role, RNA-binding protein that suppresses transcription of long non-coding RNAs (lncRNAs). LncRNAs are defined as transcripts more than 200 nucleotides that are not translated into protein. Together with WDR82, part of a transcription termination checkpoint that promotes transcription termination of lncRNAs and their subsequent degradation by the exosome. The transcription termination checkpoint is activated by the inefficiently spliced first exon of lncRNAs. In Homo sapiens (Human), this protein is Zinc finger CCCH domain-containing protein 4.